A 105-amino-acid polypeptide reads, in one-letter code: Large ribosomal subunit protein uL24 (105 aa).

Belongs to the universal ribosomal protein uL24 family. As to quaternary structure, part of the 50S ribosomal subunit.

One of two assembly initiator proteins, it binds directly to the 5'-end of the 23S rRNA, where it nucleates assembly of the 50S subunit. Its function is as follows. One of the proteins that surrounds the polypeptide exit tunnel on the outside of the subunit. This is Large ribosomal subunit protein uL24 from Sorangium cellulosum (strain So ce56) (Polyangium cellulosum (strain So ce56)).